The chain runs to 133 residues: Large ribosomal subunit protein eL32z (133 aa).

It belongs to the eukaryotic ribosomal protein eL32 family.

This chain is Large ribosomal subunit protein eL32z (RPL32A), found in Arabidopsis thaliana (Mouse-ear cress).